We begin with the raw amino-acid sequence, 429 residues long: CinA-like protein (429 aa).

The protein belongs to the CinA family.

This chain is CinA-like protein, found in Chlorobium limicola (strain DSM 245 / NBRC 103803 / 6330).